The sequence spans 113 residues: UPF0482 protein KPK_2871 (113 aa).

The first 28 residues, 1 to 28 (MNMTLNKRWCLTAILALSAVVYTSSSFA), serve as a signal peptide directing secretion. The tract at residues 38 to 61 (GDSAQSRQQASMEKEQWNDTRSLR) is disordered. Over residues 39-48 (DSAQSRQQAS) the composition is skewed to polar residues. A compositionally biased stretch (basic and acidic residues) spans 49–59 (MEKEQWNDTRS).

It belongs to the UPF0482 family.

This chain is UPF0482 protein KPK_2871, found in Klebsiella pneumoniae (strain 342).